The following is a 754-amino-acid chain: Bifunctional sesterterpene synthase astC (754 aa).

Positions 1-24 (MASLEVFVLYLRIFFISFMSRARS) are cleaved as a signal peptide. A sesterterpene synthase region spans residues 58 to 388 (IQYRHSKLVD…RYHFHKPEHW (331 aa)). Positions 149 and 153 each coordinate Mg(2+). A geranylfarnesyl diphosphate synthase region spans residues 389–753 (RQVENVDDDG…LRLLLKRLHV (365 aa)). Residues 392 to 403 (ENVDDDGNKSDD) are compositionally biased toward basic and acidic residues. The disordered stretch occupies residues 392–414 (ENVDDDGNKSDDSGIAMKDSPES). 2 residues coordinate Mg(2+): D512 and D516.

The protein in the N-terminal section; belongs to the terpene synthase family. It in the C-terminal section; belongs to the FPP/GGPP synthase family. The cofactor is Mg(2+).

The catalysed reaction is (2E,6E,10E,14E)-geranylfarnesyl diphosphate = preasperterpenoid A + diphosphate. It participates in secondary metabolite biosynthesis; terpenoid biosynthesis. In terms of biological role, bifunctional sesterterpene synthase; part of the gene cluster that mediates the biosynthesis of the asperterpenoids, sesterterpenes that exhibit anti-tuberculosis activity. The first step of the pathway is performed by the sesterterpene synthase astC that possesses both prenyl transferase and terpene cyclase activity, converting isopentenyl diphosphate and dimethylallyl diphosphate into geranylfarnesyl diphosphate (GFPP) and further converting GFPP into preasperterpenoid A, respectively. The cytochrome P450 monooxygenase astB then dually oxidizes preasperterpenoid A to produce asperterpenoid A along with a minor product, asperterpenoid B. Finally, the cytochrome P450 monooxygenase astA converts asperterpenoid A into asperterpenoid C. This is Bifunctional sesterterpene synthase astC from Talaromyces wortmannii (Penicillium wortmannii).